The chain runs to 68 residues: Large ribosomal subunit protein bL32 (68 aa).

This sequence belongs to the bacterial ribosomal protein bL32 family.

The polypeptide is Large ribosomal subunit protein bL32 (Orientia tsutsugamushi (strain Ikeda) (Rickettsia tsutsugamushi)).